The following is a 134-amino-acid chain: UPF0357 protein AAL017W (134 aa).

The signal sequence occupies residues 1–23 (MFGLISLWHLFWLAVMAGILVVA).

Belongs to the UPF0357 family.

This chain is UPF0357 protein AAL017W, found in Eremothecium gossypii (strain ATCC 10895 / CBS 109.51 / FGSC 9923 / NRRL Y-1056) (Yeast).